The chain runs to 196 residues: UPF0340 protein TTHA0583 (196 aa).

It belongs to the UPF0340 family.

The sequence is that of UPF0340 protein TTHA0583 from Thermus thermophilus (strain ATCC 27634 / DSM 579 / HB8).